The sequence spans 1058 residues: MPKRKDIKTILVIGSGPIIIGQAAEFDYAGTQACLSLREEGYEVILVNSNPATIMTDKEIADKVYIEPLTVEFLSKIIRKEKPDALLPTLGGQVALNLAVSLHESGILDECGVEILGTKLTSIKQAEDRELFRDLMNELNEPVPDSAIVHTLEEAENFVKEIDYPVIVRPAFTMGGTGGGICYNEEDLHEIVPNGLNYSPVHQCLLEKSIAGYKEIEYEVMRDSNDTAIVVCNMENIDPVGIHTGDSIVVAPSQTLTDREHHMLRDVSLKIIRALKIEGGCNVQIALDPNSFKYYIIEVNPRVSRSSALASKATGYPIAKIAAKIAVGMTLDEIINPVTKSSYACFEPAIDYVVTKIPRFPFDKFGDGDRYLGTQMKATGEVMAIGRTLEESLLKAIRSLEYGVHHLGLPNGEEFSLEKIIKRIKLAGDERLFFIGEALRRDVSIEEIHEYTKIDLFFLNKMKNIIDLEHLLKDNKGNIELLRKVKTFGFSDRVIAHRWEMTEPEITELRHKHNIRPVYKMVDTCAAEFDSNTPYFYSTYEFENESTRSDKEKIVVLGSGPIRIGQGIEFDYATVHAIMAIKKLGYEAIVINNNPETVSTDFSISDKLYFEPLTQEDVMEILDLEKPLGVVVQFGGQTAINLADKLVKNGIQILGSSLDSIDTAEDRDRFEKLLIGLKIPQPLGKTAFDVETALKNANEIGYPVLVRPSYVLGGRAMEIVYNDEDLTKYMEKAVHINPDHPVLIDRYLIGKEIEVDAISDGENTFIPGIMEHIERAGVHSGDSISIYPPQSLSEKEIETLIDYTKKLASGLEVKGLINIQYVVSKGEIYVLEVNPRASRTVPFLSKVTGVPVANIAMQCILGKKLKDLGFTKDIADIGNFVSVKVPVFSFQKLKNVDTTLGPEMKSTGEVIGTDVNLQKALYKGLTAAGIKIKDYGRVLFTIDDKNKEAALNLAKGFSDVGFSILTTEGTGIYFEEYGLKVKKVGKIDNSDYSVLDAIQNGDVDIVINTTTKGKSSEKDGFRIRRKATEYGVICFTSLDTANALLRVIESMSFRVQTL.

Positions 1–401 (MPKRKDIKTI…SLLKAIRSLE (401 aa)) are carboxyphosphate synthetic domain. ATP-binding residues include Arg129, Arg169, Gly175, Gly176, Lys208, Ile210, Glu215, Gly241, Ile242, His243, Gln284, and Glu298. The ATP-grasp 1 domain occupies 133–327 (RDLMNELNEP…IAKIAAKIAV (195 aa)). The Mg(2+) site is built by Gln284, Glu298, and Asn300. Positions 284, 298, and 300 each coordinate Mn(2+). The oligomerization domain stretch occupies residues 402–546 (YGVHHLGLPN…YSTYEFENES (145 aa)). The segment at 547–929 (TRSDKEKIVV…ALYKGLTAAG (383 aa)) is carbamoyl phosphate synthetic domain. The ATP-grasp 2 domain maps to 671-861 (EKLLIGLKIP…VANIAMQCIL (191 aa)). Arg707, Arg746, Leu748, Glu752, Gly777, Val778, His779, Ser780, Gln820, and Glu832 together coordinate ATP. The Mg(2+) site is built by Gln820, Glu832, and Asn834. Mn(2+) contacts are provided by Gln820, Glu832, and Asn834. The MGS-like domain maps to 930–1058 (IKIKDYGRVL…ESMSFRVQTL (129 aa)). The tract at residues 930 to 1058 (IKIKDYGRVL…ESMSFRVQTL (129 aa)) is allosteric domain.

It belongs to the CarB family. In terms of assembly, composed of two chains; the small (or glutamine) chain promotes the hydrolysis of glutamine to ammonia, which is used by the large (or ammonia) chain to synthesize carbamoyl phosphate. Tetramer of heterodimers (alpha,beta)4. Mg(2+) serves as cofactor. Requires Mn(2+) as cofactor.

It catalyses the reaction hydrogencarbonate + L-glutamine + 2 ATP + H2O = carbamoyl phosphate + L-glutamate + 2 ADP + phosphate + 2 H(+). The catalysed reaction is hydrogencarbonate + NH4(+) + 2 ATP = carbamoyl phosphate + 2 ADP + phosphate + 2 H(+). Its pathway is amino-acid biosynthesis; L-arginine biosynthesis; carbamoyl phosphate from bicarbonate: step 1/1. It functions in the pathway pyrimidine metabolism; UMP biosynthesis via de novo pathway; (S)-dihydroorotate from bicarbonate: step 1/3. Functionally, large subunit of the glutamine-dependent carbamoyl phosphate synthetase (CPSase). CPSase catalyzes the formation of carbamoyl phosphate from the ammonia moiety of glutamine, carbonate, and phosphate donated by ATP, constituting the first step of 2 biosynthetic pathways, one leading to arginine and/or urea and the other to pyrimidine nucleotides. The large subunit (synthetase) binds the substrates ammonia (free or transferred from glutamine from the small subunit), hydrogencarbonate and ATP and carries out an ATP-coupled ligase reaction, activating hydrogencarbonate by forming carboxy phosphate which reacts with ammonia to form carbamoyl phosphate. The polypeptide is Carbamoyl phosphate synthase large chain (Fusobacterium nucleatum subsp. nucleatum (strain ATCC 25586 / DSM 15643 / BCRC 10681 / CIP 101130 / JCM 8532 / KCTC 2640 / LMG 13131 / VPI 4355)).